A 139-amino-acid chain; its full sequence is Plastocyanin (139 aa).

A signal peptide spans 1–34; it reads MKLIAASLRRLSLAVLTVLLVVSSFAVFTPSAAA. In terms of domain architecture, Plastocyanin-like spans 35-135; sequence ETYTVKLGSD…HRGAGMVGKI (101 aa). The Cu cation site is built by His73, Cys123, His126, and Met131.

It belongs to the plastocyanin family. The cofactor is Cu(2+).

It localises to the cellular thylakoid membrane. Functionally, participates in electron transfer between P700 and the cytochrome b6-f complex in photosystem I. The protein is Plastocyanin (petE) of Trichormus variabilis (strain ATCC 29413 / PCC 7937) (Anabaena variabilis).